A 249-amino-acid chain; its full sequence is tRNA (guanine-N(1)-)-methyltransferase (249 aa).

S-adenosyl-L-methionine contacts are provided by residues Gly-118 and 138–143 (IGDYVL).

This sequence belongs to the RNA methyltransferase TrmD family. Homodimer.

The protein resides in the cytoplasm. It catalyses the reaction guanosine(37) in tRNA + S-adenosyl-L-methionine = N(1)-methylguanosine(37) in tRNA + S-adenosyl-L-homocysteine + H(+). Its function is as follows. Specifically methylates guanosine-37 in various tRNAs. In Alkaliphilus oremlandii (strain OhILAs) (Clostridium oremlandii (strain OhILAs)), this protein is tRNA (guanine-N(1)-)-methyltransferase.